The sequence spans 147 residues: Hemoglobin subunit beta-1 (147 aa).

At Val2 the chain carries N-acetylvaline. The Globin domain occupies 3–147 (HLTGEEKAAV…VATALAHKYH (145 aa)). At Lys18 the chain carries N6-succinyllysine. Ser45 is modified (phosphoserine). Lys60 carries the N6-succinyllysine modification. Heme b is bound by residues His64 and His93. Arg105 carries the asymmetric dimethylarginine modification. Thr124 bears the Phosphothreonine mark.

The protein belongs to the globin family. As to quaternary structure, hb1 is a heterotetramer of two alpha chains and two beta-1 chains. Red blood cells.

Functionally, involved in oxygen transport from the lung to the various peripheral tissues. The sequence is that of Hemoglobin subunit beta-1 (HBB1) from Chalinolobus morio (Chocolate-wattled bat).